The chain runs to 1276 residues: MKYSLPWLLTSSALVFSLHPLMAANTDLSSSDNYENGSSGSAAFTAKETSDASGTTYTLTSDVSITNVSAITPADKSCFTNTGGALSFVGADHSLVLQTIALTHDGAAINNTNTALSFSGFSSLLIDSAPATGTSGGKGAICVTNTEGGTATFTDNASVTLQKNTSEKDGAAVSAYSIDLAKTTTAALLDQNTSTKNGGALCSTANTTVQGNSGTVTFSSNTATDKGGGIYSKEKDSTLDANTGVVTFKSNTAKTGGAWSSDDNLALTGNTQVLFQENKTTGSAAQANNPEGCGGAICCYLATATDKTGLAISQNQEMSFTSNTTTANGGAIYATKCTLDGNTTLTFDQNTATAGCGGAIYTETEDFSLKGSTGTVTFSTNTAKTGGALYSKGNSSLTGNTNLLFSGNKATGPSNSSANQEGCGGAILSFLESASVSTKKGLWIEDNENVSLSGNTATVSGGAIYATKCALHGNTTLTFDGNTAETAGGAIYTETEDFTLTGSTGTVTFSTNTAKTAGALHTKGNTSFTKNKALVFSGNSATATATTTTDQEGCGGAILCNISESDIATKSLTLTENESLSFINNTAKRSGGGIYAPKCVISGSESINFDGNTAETSGGAIYSKNLSITANGPVSFTNNSGGKGGAIYIADSGELSLEAIDGDITFSGNRATEGTSTPNSIHLGAGAKITKLAAAPGHTIYFYDPITMEAPASGGTIEELVINPVVKAIVPPPQPKNGPIASVPVVPVAPANPNTGTIVFSSGKLPSQDASIPANTTTILNQKINLAGGNVVLKEGATLQVYSFTQQPDSTVFMDAGTTLETTTTNNTDGSIDLKNLSVNLDALDGKRMITIAVNSTSGGLKISGDLKFHNNEGSFYDNPGLKANLNLPFLDLSSTSGTVNLDDFNPIPSSMAAPDYGYQGSWTLVPKVGAGGKVTLVAEWQALGYTPKPELRATLVPNSLWNAYVNIHSIQQEIATAMSDAPSHPGIWIGGIGNAFHQDKQKENAGFRLISRGYIVGGSMTTPQEYTFAVAFSQLFGKSKDYVVSDIKSQVYAGSLCAQSSYVIPLHSSLRRHVLSKVLPELPGETPLVLHGQVSYGRNHHNMTTKLANNTQGKSDWDSHSFAVEVGGSLPVDLNYRYLTSYSPYVKLQVVSVNQKGFQEVAADPRIFDASHLVNVSIPMGLTFKHESAKPPSALLLTLGYAVDAYRDHPHCLTSLTNGTSWSTFATNLSRQAFFAEASGHLKLLHGLDCFASGSCELRSSSRSYNANCGTRYSF.

An N-terminal signal peptide occupies residues M1–A23. An Autotransporter domain is found at D981 to F1276.

This sequence belongs to the PMP outer membrane protein family.

The protein resides in the secreted. The protein localises to the cell wall. Its subcellular location is the cell outer membrane. The chain is Probable outer membrane protein pmp6 (pmp6) from Chlamydia pneumoniae (Chlamydophila pneumoniae).